A 286-amino-acid polypeptide reads, in one-letter code: 4-diphosphocytidyl-2-C-methyl-D-erythritol kinase (286 aa).

The active site involves Lys-11. 93–103 lines the ATP pocket; it reads PFGAGLGGGSS. Asp-135 is a catalytic residue.

Belongs to the GHMP kinase family. IspE subfamily.

The catalysed reaction is 4-CDP-2-C-methyl-D-erythritol + ATP = 4-CDP-2-C-methyl-D-erythritol 2-phosphate + ADP + H(+). It participates in isoprenoid biosynthesis; isopentenyl diphosphate biosynthesis via DXP pathway; isopentenyl diphosphate from 1-deoxy-D-xylulose 5-phosphate: step 3/6. Its function is as follows. Catalyzes the phosphorylation of the position 2 hydroxy group of 4-diphosphocytidyl-2C-methyl-D-erythritol. The polypeptide is 4-diphosphocytidyl-2-C-methyl-D-erythritol kinase (Chlorobium phaeobacteroides (strain BS1)).